The sequence spans 837 residues: Zinc fingers and homeoboxes protein 2 (837 aa).

The interval 1–41 is disordered; the sequence is MASKRKSTTPCMVRTSQVVEQDVPEEVDRAKEKGIGTPQPD. An interaction with EFNB1 region spans residues 27–77; the sequence is VDRAKEKGIGTPQPDVAKDCWAAELENSSKENEVIEVKSMGESQSKKLQGG. A Phosphothreonine modification is found at T37. K64 participates in a covalent cross-link: Glycyl lysine isopeptide (Lys-Gly) (interchain with G-Cter in SUMO2). 2 consecutive C2H2-type zinc fingers follow at residues 78–101 and 110–133; these read YECKYCPYSTQNLNEFTEHVDMQH and YVCAECNFTTKKYDSLSDHNSKFH. Positions 167 to 180 are enriched in low complexity; the sequence is TSGPGTGDSDSGIS. Residues 167–203 are disordered; it reads TSGPGTGDSDSGISVSKTPIMKPGKPKADAKKVPKKP. The segment covering 192 to 203 has biased composition (basic and acidic residues); the sequence is PKADAKKVPKKP. The required for homodimerization stretch occupies residues 195-358; it reads DAKKVPKKPE…PAQLAPTKVT (164 aa). 4 DNA-binding regions (homeobox) span residues 263–324, 439–501, 530–591, and 628–690; these read NTTK…WSPE, TPAS…IVHI, PQKF…EQAV, and SPSP…TVKW. The segment at 263–446 is required for repressor activity; that stretch reads NTTKYNSALD…PLTPASDRKK (184 aa). Positions 263 to 497 are required for interaction with NFYA; it reads NTTKYNSALD…SDHRYRCQRG (235 aa). The interval 317 to 446 is required for nuclear localization; the sequence is HGISWSPEEV…PLTPASDRKK (130 aa). Positions 404–445 are disordered; sequence GQKRPLVTPQAAPEPKRPHIAQVPEPPPKVANPPLTPASDRK. A compositionally biased stretch (pro residues) spans 427–439; it reads PEPPPKVANPPLT. K455 participates in a covalent cross-link: Glycyl lysine isopeptide (Lys-Gly) (interchain with G-Cter in SUMO2). Residues 754–837 are disordered; that stretch reads EPAKDCLPAK…DCVPAEAGQA (84 aa). S825 and S827 each carry phosphoserine.

The protein belongs to the ZHX family. Homodimer (via homeobox domain 1). Heterodimer with ZHX1 (via homeobox domain 1). Heterodimer with ZHX3 (via homeobox domain 1). Heterodimerization with ZHX1 is not necessary for repressor activity. Interacts (via homeobox domain) with NFYA (via N-terminus). Interacts with EFNB1 intracellular domain peptide; the interaction enhances ZHX2 transcriptional repression activity.

Its subcellular location is the nucleus. Acts as a transcriptional repressor. Represses the promoter activity of the CDC25C gene stimulated by NFYA. May play a role in retinal development where it regulates the composition of bipolar cell populations, by promoting differentiation of bipolar OFF-type cells. In the brain, may promote maintenance and suppress differentiation of neural progenitor cells in the developing cortex. This Pongo abelii (Sumatran orangutan) protein is Zinc fingers and homeoboxes protein 2 (ZHX2).